A 555-amino-acid chain; its full sequence is 2-succinyl-5-enolpyruvyl-6-hydroxy-3-cyclohexene-1-carboxylate synthase (555 aa).

The protein belongs to the TPP enzyme family. MenD subfamily. In terms of assembly, homodimer. It depends on Mg(2+) as a cofactor. Mn(2+) serves as cofactor. Thiamine diphosphate is required as a cofactor.

It carries out the reaction isochorismate + 2-oxoglutarate + H(+) = 5-enolpyruvoyl-6-hydroxy-2-succinyl-cyclohex-3-ene-1-carboxylate + CO2. Its pathway is quinol/quinone metabolism; 1,4-dihydroxy-2-naphthoate biosynthesis; 1,4-dihydroxy-2-naphthoate from chorismate: step 2/7. It participates in quinol/quinone metabolism; menaquinone biosynthesis. Functionally, catalyzes the thiamine diphosphate-dependent decarboxylation of 2-oxoglutarate and the subsequent addition of the resulting succinic semialdehyde-thiamine pyrophosphate anion to isochorismate to yield 2-succinyl-5-enolpyruvyl-6-hydroxy-3-cyclohexene-1-carboxylate (SEPHCHC). In Bacteroides thetaiotaomicron (strain ATCC 29148 / DSM 2079 / JCM 5827 / CCUG 10774 / NCTC 10582 / VPI-5482 / E50), this protein is 2-succinyl-5-enolpyruvyl-6-hydroxy-3-cyclohexene-1-carboxylate synthase.